The following is a 301-amino-acid chain: Probable 2-dehydro-3-deoxy-D-pentonate aldolase YjhH (301 aa).

Active-site charge relay system residues include T46 and Y109. Y135 (proton donor) is an active-site residue. Catalysis depends on K164, which acts as the Schiff-base intermediate with substrate.

Belongs to the DapA family.

The protein localises to the cytoplasm. The catalysed reaction is 2-dehydro-3-deoxy-D-arabinonate = glycolaldehyde + pyruvate. Functions as a 2-dehydro-3-deoxy-D-pentonate aldolase. The sequence is that of Probable 2-dehydro-3-deoxy-D-pentonate aldolase YjhH (yjhH) from Escherichia coli (strain K12).